Here is a 478-residue protein sequence, read N- to C-terminus: Probable glucan endo-1,3-beta-glucosidase A6 (478 aa).

The signal sequence occupies residues 1 to 20 (MSLLAFFLFTILVFSSSCCS). The active-site Proton donor is the glutamate 135. Glutamate 280 functions as the Nucleophile in the catalytic mechanism. Residues cysteine 390 and cysteine 453 are joined by a disulfide bond.

Belongs to the glycosyl hydrolase 17 family. Post-translationally, contains two additional disulfide bonds, but it is unclear if they are between the pairs Cys-409-Cys-416 and Cys-425-Cys-471 or between the pairs Cys-409-Cys-471 and Cys-416-Cys-425. Anthers.

The catalysed reaction is Hydrolysis of (1-&gt;3)-beta-D-glucosidic linkages in (1-&gt;3)-beta-D-glucans.. In terms of biological role, probable beta-1,3-glucanase that may be involved in the degradation of callose walls around the microspore tetrad during pollen development. May be required for pollen exine formation. In Arabidopsis thaliana (Mouse-ear cress), this protein is Probable glucan endo-1,3-beta-glucosidase A6.